Here is a 663-residue protein sequence, read N- to C-terminus: DNA ligase (663 aa).

NAD(+)-binding positions include 33–37 (DYSYD), 82–83 (SI), and Glu112. Lys114 (N6-AMP-lysine intermediate) is an active-site residue. NAD(+) is bound by residues Arg135, Glu171, Lys285, and Lys309. Zn(2+)-binding residues include Cys403, Cys406, Cys419, and Cys424. The 83-residue stretch at 581-663 (DKEAPLQGKV…LRILDAKSVS (83 aa)) folds into the BRCT domain.

The protein belongs to the NAD-dependent DNA ligase family. LigA subfamily. Mg(2+) serves as cofactor. The cofactor is Mn(2+).

It catalyses the reaction NAD(+) + (deoxyribonucleotide)n-3'-hydroxyl + 5'-phospho-(deoxyribonucleotide)m = (deoxyribonucleotide)n+m + AMP + beta-nicotinamide D-nucleotide.. DNA ligase that catalyzes the formation of phosphodiester linkages between 5'-phosphoryl and 3'-hydroxyl groups in double-stranded DNA using NAD as a coenzyme and as the energy source for the reaction. It is essential for DNA replication and repair of damaged DNA. The protein is DNA ligase of Chlamydia trachomatis serovar A (strain ATCC VR-571B / DSM 19440 / HAR-13).